A 927-amino-acid polypeptide reads, in one-letter code: MEADGQSWAGESVSGPGPGGGGMIRELCRGFSRYRRYLGRLRQNLRETQKFFRDIKCSHSHSCPSSPAGGGAAELGPAGDVAEAPLPAGQLSCISFPPMEETYLQQLVDRLPCILILGQDCNAKCQLLNLLLGVQVLPTLKLDSDESCKLRRLRFTYGTRTRVSLALPGQYELVHTLASHQDNWETIPEEDLEVQEDSEDAAHVLADLEVTMHHALLQEVDIVVAPCPSHRPSVDVLSDLANDFLPVITYALHKDELSERGEQELREVRQYFSFPMFFFKVPKLEIISSSSGRAESERSPLYGQLVDLGYLSSSHRNCVPSDQDCKAQSMLVEQSEKLKQLSTFSHQLLQNRLVDAAKALNVVHSHCLDIFINQAFDMQRDLQITPKRLEYTRKKENELYESLMNIANRKQEEMKDMIVETLNTMKEELLDDAANMEFKDVIVPENGETIGTREIKSCIRQIQELIISRLNQAVANKLISSVDYLRESFVGTLERCLQSLEKSQDVSVHITSNYLKQILNAAYHVEVTFHSGSSVTRMLWEQIKQIIQRITWVNPPTITLEWKRKVAQEAIDSLSASKLAKSICSQFRTRLNSSHEAFAASLRQLEAGHSGRLEKTEDLWLKVRKDHAPRLARLSLESRSLQDVLLHRKPKLGQELGRGQYGVVYLCDNWGGHFPCALKSVVPPDEKHWNDLALEFHYMRSLPKHERLVDLHGSVIDYNYGGGSSVAVLLIMERLHRDLYTGLKAGLTLETRLQIALDVVEGIRFLHSQGLVHRDIKLKNVLLDKQNRAKITDLGFCKPEAMMSGSIVGTPIHMAPELFTGKYDNSVDVYAFGILFWYICSGSIKLPEAFERCASKDHLWNNVRRGTRPERLPVFDEECWQLMEACWDGDPLKRPLLGIVQPMLRSIMDRLCKCSSEQPNRGLDDST.

Positions 1–21 (MEADGQSWAGESVSGPGPGGG) are disordered. A coiled-coil region spans residues 393–429 (RKKENELYESLMNIANRKQEEMKDMIVETLNTMKEEL). A Protein kinase domain is found at 650 to 904 (PKLGQELGRG…PLLGIVQPML (255 aa)). ATP is bound by residues 656–664 (LGRGQYGVV) and K679. The Proton acceptor role is filled by D775.

The protein belongs to the protein kinase superfamily. Ser/Thr protein kinase family. Expressed in brain, heart, skeletal muscle, kidney and lung. Expressed in maturing tubular epithelia, with the most prominent expression in the medulla and the papilla. Expressed in thin ascending limb of the loop of Henle and the distal convoluted tubule. Expressed in all layers of transitional ureteric epithelium and in the ureteric smooth-muscle cells (at protein level). Widely expressed. Highly expressed in many brain regions, including in cerebellum, olfactory, hippocampus and cerebral cortex.

Its subcellular location is the cytoplasm. It localises to the cell membrane. The protein resides in the apical cell membrane. It is found in the basolateral cell membrane. The protein localises to the cell junction. The catalysed reaction is L-seryl-[protein] + ATP = O-phospho-L-seryl-[protein] + ADP + H(+). The enzyme catalyses L-threonyl-[protein] + ATP = O-phospho-L-threonyl-[protein] + ADP + H(+). It carries out the reaction L-tyrosyl-[protein] + ATP = O-phospho-L-tyrosyl-[protein] + ADP + H(+). Acts as a positive regulator of ERK phosphorylation downstream of fibroblast growth factor-receptor activation. Involved in the regulation of both caspase-dependent apoptosis and caspase-independent cell death. In the skin, it plays a predominant role in suppressing caspase-dependent apoptosis in response to UV stress in a range of dermal cell types. This chain is Dual serine/threonine and tyrosine protein kinase (Dstyk), found in Mus musculus (Mouse).